The primary structure comprises 214 residues: Adenylate kinase (214 aa).

Residue 10–15 (GAGKGT) coordinates ATP. The interval 30–59 (STGDMLRAAIKAGTELGNAAKRVMDEGKLV) is NMP. AMP is bound by residues Thr-31, Arg-36, 57–59 (KLV), 85–88 (GFPR), and Gln-92. Residues 122-159 (GRRVHPASGRVYHLQYNPPQNDGKDDETGEDLVIRADD) are LID. ATP contacts are provided by residues Arg-123 and 132-133 (VY). Arg-156 and Arg-167 together coordinate AMP. Lys-200 provides a ligand contact to ATP.

The protein belongs to the adenylate kinase family. In terms of assembly, monomer.

Its subcellular location is the cytoplasm. It catalyses the reaction AMP + ATP = 2 ADP. It functions in the pathway purine metabolism; AMP biosynthesis via salvage pathway; AMP from ADP: step 1/1. Catalyzes the reversible transfer of the terminal phosphate group between ATP and AMP. Plays an important role in cellular energy homeostasis and in adenine nucleotide metabolism. This is Adenylate kinase from Pseudoalteromonas atlantica (strain T6c / ATCC BAA-1087).